A 120-amino-acid polypeptide reads, in one-letter code: Non-specific lipid-transfer protein (120 aa).

The N-terminal stretch at 1-26 (MGVLRSSFVAMMVMYMVLATTPNAEA) is a signal peptide. Disulfide bonds link cysteine 30–cysteine 79, cysteine 40–cysteine 56, cysteine 57–cysteine 102, and cysteine 77–cysteine 116.

Belongs to the plant LTP family. In terms of tissue distribution, expressed in protoderm cells of somatic and zygotic embryos, and transiently expressed in epidermal cell layers of leaves, flowers and seeds.

Functionally, plant non-specific lipid-transfer proteins transfer phospholipids as well as galactolipids across membranes. May play a role in wax or cutin deposition in the cell walls of expanding epidermal cells and certain secretory tissues. The polypeptide is Non-specific lipid-transfer protein (EP2) (Daucus carota (Wild carrot)).